The following is a 264-amino-acid chain: Occludin/ELL domain-containing protein 1 (264 aa).

Residues methionine 1 to proline 10 show a composition bias toward polar residues. The interval methionine 1–lysine 112 is disordered. Over residues proline 96–glycine 105 the composition is skewed to pro residues. One can recognise an OCEL domain in the interval proline 147 to aspartate 257.

Belongs to the ELL/occludin family.

The chain is Occludin/ELL domain-containing protein 1 (OCEL1) from Homo sapiens (Human).